Consider the following 285-residue polypeptide: Small ribosomal subunit protein uS2 (285 aa).

Positions 229 to 285 (AGLASGDAKPEAGAGEPLAEWEQELLAQANPNAEGSAEAAPAAATEEAPAAQTPADF) are disordered. Over residues 257 to 285 (ANPNAEGSAEAAPAAATEEAPAAQTPADF) the composition is skewed to low complexity.

This sequence belongs to the universal ribosomal protein uS2 family.

This chain is Small ribosomal subunit protein uS2, found in Nocardia farcinica (strain IFM 10152).